The primary structure comprises 273 residues: Dermonecrotic toxin SdSicTox-betaIF1 (273 aa).

The active site involves H5. 2 residues coordinate Mg(2+): E25 and D27. H41 functions as the Nucleophile in the catalytic mechanism. Disulfide bonds link C45-C51 and C47-C189.

Belongs to the arthropod phospholipase D family. Class II subfamily. Mg(2+) serves as cofactor. Expressed by the venom gland.

The protein resides in the secreted. It carries out the reaction an N-(acyl)-sphingosylphosphocholine = an N-(acyl)-sphingosyl-1,3-cyclic phosphate + choline. The catalysed reaction is an N-(acyl)-sphingosylphosphoethanolamine = an N-(acyl)-sphingosyl-1,3-cyclic phosphate + ethanolamine. It catalyses the reaction a 1-acyl-sn-glycero-3-phosphocholine = a 1-acyl-sn-glycero-2,3-cyclic phosphate + choline. The enzyme catalyses a 1-acyl-sn-glycero-3-phosphoethanolamine = a 1-acyl-sn-glycero-2,3-cyclic phosphate + ethanolamine. Dermonecrotic toxins cleave the phosphodiester linkage between the phosphate and headgroup of certain phospholipids (sphingolipid and lysolipid substrates), forming an alcohol (often choline) and a cyclic phosphate. This toxin acts on sphingomyelin (SM). It may also act on ceramide phosphoethanolamine (CPE), lysophosphatidylcholine (LPC) and lysophosphatidylethanolamine (LPE), but not on lysophosphatidylserine (LPS), and lysophosphatidylglycerol (LPG). It acts by transphosphatidylation, releasing exclusively cyclic phosphate products as second products. Induces dermonecrosis, hemolysis, increased vascular permeability, edema, inflammatory response, and platelet aggregation. The protein is Dermonecrotic toxin SdSicTox-betaIF1 of Sicarius cf. damarensis (strain GJB-2008) (Six-eyed sand spider).